Consider the following 96-residue polypeptide: Protein Vpr (96 aa).

The tract at residues 1-42 is homooligomerization; that stretch reads MEQAPEDQGPQREPYNDWTLELLEELKNEAVRHFPRIWLHSL. A phosphoserine; by host mark is found at S79, S94, and S96.

It belongs to the HIV-1 VPR protein family. In terms of assembly, homooligomer, may form homodimer. Interacts with p6-gag region of the Pr55 Gag precursor protein through a (Leu-X-X)4 motif near the C-terminus of the P6gag protein. Interacts with host UNG. May interact with host RAD23A/HHR23A. Interacts with host VPRBP/DCAF1, leading to hijack the CUL4A-RBX1-DDB1-DCAF1/VPRBP complex, mediating ubiquitination of host proteins such as TERT and ZGPAT and arrest of the cell cycle in G2 phase. Phosphorylated on several residues by host. These phosphorylations regulate VPR activity for the nuclear import of the HIV-1 pre-integration complex.

It localises to the virion. It is found in the host nucleus. Its subcellular location is the host extracellular space. Functionally, during virus replication, may deplete host UNG protein, and incude G2-M cell cycle arrest. Acts by targeting specific host proteins for degradation by the 26S proteasome, through association with the cellular CUL4A-DDB1 E3 ligase complex by direct interaction with host VPRPB/DCAF-1. Cell cycle arrest reportedly occurs within hours of infection and is not blocked by antiviral agents, suggesting that it is initiated by the VPR carried into the virion. Additionally, VPR induces apoptosis in a cell cycle dependent manner suggesting that these two effects are mechanistically linked. Detected in the serum and cerebrospinal fluid of AIDS patient, VPR may also induce cell death to bystander cells. Its function is as follows. During virus entry, plays a role in the transport of the viral pre-integration (PIC) complex to the host nucleus. This function is crucial for viral infection of non-dividing macrophages. May act directly at the nuclear pore complex, by binding nucleoporins phenylalanine-glycine (FG)-repeat regions. In Human immunodeficiency virus type 1 group M subtype B (strain 89.6) (HIV-1), this protein is Protein Vpr.